Reading from the N-terminus, the 494-residue chain is Glycogen synthase (494 aa).

Lys-15 contacts ADP-alpha-D-glucose.

This sequence belongs to the glycosyltransferase 1 family. Bacterial/plant glycogen synthase subfamily.

The enzyme catalyses [(1-&gt;4)-alpha-D-glucosyl](n) + ADP-alpha-D-glucose = [(1-&gt;4)-alpha-D-glucosyl](n+1) + ADP + H(+). It functions in the pathway glycan biosynthesis; glycogen biosynthesis. Functionally, synthesizes alpha-1,4-glucan chains using ADP-glucose. This is Glycogen synthase from Albidiferax ferrireducens (strain ATCC BAA-621 / DSM 15236 / T118) (Rhodoferax ferrireducens).